Reading from the N-terminus, the 270-residue chain is Glucosamine-6-phosphate deaminase (270 aa).

Aspartate 72 acts as the Proton acceptor; for enolization step in catalysis. The active-site For ring-opening step is aspartate 141. Histidine 143 (proton acceptor; for ring-opening step) is an active-site residue. Glutamate 148 serves as the catalytic For ring-opening step.

This sequence belongs to the glucosamine/galactosamine-6-phosphate isomerase family. NagB subfamily.

The enzyme catalyses alpha-D-glucosamine 6-phosphate + H2O = beta-D-fructose 6-phosphate + NH4(+). It participates in amino-sugar metabolism; N-acetylneuraminate degradation; D-fructose 6-phosphate from N-acetylneuraminate: step 5/5. With respect to regulation, allosterically activated by N-acetylglucosamine 6-phosphate (GlcNAc6P). Functionally, catalyzes the reversible isomerization-deamination of glucosamine 6-phosphate (GlcN6P) to form fructose 6-phosphate (Fru6P) and ammonium ion. This Parabacteroides distasonis (strain ATCC 8503 / DSM 20701 / CIP 104284 / JCM 5825 / NCTC 11152) protein is Glucosamine-6-phosphate deaminase.